Here is a 394-residue protein sequence, read N- to C-terminus: NAD(P)H-quinone oxidoreductase subunit H (394 aa).

The protein belongs to the complex I 49 kDa subunit family. As to quaternary structure, NDH-1 can be composed of about 15 different subunits; different subcomplexes with different compositions have been identified which probably have different functions.

Its subcellular location is the cellular thylakoid membrane. The enzyme catalyses a plastoquinone + NADH + (n+1) H(+)(in) = a plastoquinol + NAD(+) + n H(+)(out). The catalysed reaction is a plastoquinone + NADPH + (n+1) H(+)(in) = a plastoquinol + NADP(+) + n H(+)(out). NDH-1 shuttles electrons from an unknown electron donor, via FMN and iron-sulfur (Fe-S) centers, to quinones in the respiratory and/or the photosynthetic chain. The immediate electron acceptor for the enzyme in this species is believed to be plastoquinone. Couples the redox reaction to proton translocation, and thus conserves the redox energy in a proton gradient. Cyanobacterial NDH-1 also plays a role in inorganic carbon-concentration. The protein is NAD(P)H-quinone oxidoreductase subunit H of Prochlorococcus marinus (strain SARG / CCMP1375 / SS120).